Here is a 615-residue protein sequence, read N- to C-terminus: 1-deoxy-D-xylulose-5-phosphate synthase (615 aa).

Thiamine diphosphate is bound by residues H72 and 111-113 (GHS). D142 lines the Mg(2+) pocket. Residues 143–144 (GA), N171, Y278, and E360 contribute to the thiamine diphosphate site. Residue N171 coordinates Mg(2+).

This sequence belongs to the transketolase family. DXPS subfamily. Homodimer. Mg(2+) serves as cofactor. Thiamine diphosphate is required as a cofactor.

It catalyses the reaction D-glyceraldehyde 3-phosphate + pyruvate + H(+) = 1-deoxy-D-xylulose 5-phosphate + CO2. The protein operates within metabolic intermediate biosynthesis; 1-deoxy-D-xylulose 5-phosphate biosynthesis; 1-deoxy-D-xylulose 5-phosphate from D-glyceraldehyde 3-phosphate and pyruvate: step 1/1. Catalyzes the acyloin condensation reaction between C atoms 2 and 3 of pyruvate and glyceraldehyde 3-phosphate to yield 1-deoxy-D-xylulose-5-phosphate (DXP). This chain is 1-deoxy-D-xylulose-5-phosphate synthase, found in Campylobacter jejuni subsp. jejuni serotype O:23/36 (strain 81-176).